Reading from the N-terminus, the 233-residue chain is Orotidine 5'-phosphate decarboxylase (233 aa).

Substrate-binding positions include D11, K34, 61–70 (DLKLHDIPNT), T117, R179, Q188, G208, and R209. K63 serves as the catalytic Proton donor.

The protein belongs to the OMP decarboxylase family. Type 1 subfamily. As to quaternary structure, homodimer.

It catalyses the reaction orotidine 5'-phosphate + H(+) = UMP + CO2. Its pathway is pyrimidine metabolism; UMP biosynthesis via de novo pathway; UMP from orotate: step 2/2. In terms of biological role, catalyzes the decarboxylation of orotidine 5'-monophosphate (OMP) to uridine 5'-monophosphate (UMP). This chain is Orotidine 5'-phosphate decarboxylase, found in Streptococcus pneumoniae (strain P1031).